A 543-amino-acid chain; its full sequence is ADIPOR-like receptor IZH3 (543 aa).

Over methionine 1–serine 259 the chain is Lumenal. Asparagine 45, asparagine 123, asparagine 153, and asparagine 256 each carry an N-linked (GlcNAc...) asparagine glycan. Residues asparagine 260–proline 280 form a helical membrane-spanning segment. Residues glutamine 281–arginine 295 lie on the Cytoplasmic side of the membrane. Residues tryptophan 296 to histidine 316 traverse the membrane as a helical segment. Residues threonine 317–phenylalanine 330 are Lumenal-facing. Asparagine 319 carries N-linked (GlcNAc...) asparagine glycosylation. Residues alanine 331 to threonine 353 form a helical membrane-spanning segment. Topologically, residues methionine 354–cysteine 357 are cytoplasmic. A helical transmembrane segment spans residues tyrosine 358–methionine 378. The Lumenal segment spans residues asparagine 379–arginine 395. The chain crosses the membrane as a helical span at residues phenylalanine 396–aspartate 416. Topologically, residues leucine 417–serine 425 are cytoplasmic. Residues proline 426–isoleucine 446 form a helical membrane-spanning segment. At proline 447 to tryptophan 505 the chain is on the lumenal side. The chain crosses the membrane as a helical span at residues tryptophan 506–isoleucine 526. Over glycine 527–serine 543 the chain is Cytoplasmic.

This sequence belongs to the ADIPOR family.

It localises to the endoplasmic reticulum membrane. ADIPOR-like receptor involved in zinc metabolism either by altering membrane sterol content or by directly altering cellular zinc levels. The polypeptide is ADIPOR-like receptor IZH3 (IZH3) (Saccharomyces cerevisiae (strain ATCC 204508 / S288c) (Baker's yeast)).